Here is a 249-residue protein sequence, read N- to C-terminus: LexA repressor (249 aa).

The tract at residues 1-26 (MAAQATGGRATQRSQQSPAKPKGLTV) is disordered. Residues 9–18 (RATQRSQQSP) are compositionally biased toward polar residues. Residues 48–68 (MREIGDTVGLASLSSVTHQLS) constitute a DNA-binding region (H-T-H motif). Active-site for autocatalytic cleavage activity residues include S173 and K210.

This sequence belongs to the peptidase S24 family. Homodimer.

It catalyses the reaction Hydrolysis of Ala-|-Gly bond in repressor LexA.. Represses a number of genes involved in the response to DNA damage (SOS response), including recA and lexA. In the presence of single-stranded DNA, RecA interacts with LexA causing an autocatalytic cleavage which disrupts the DNA-binding part of LexA, leading to derepression of the SOS regulon and eventually DNA repair. This is LexA repressor from Arthrobacter sp. (strain FB24).